The primary structure comprises 326 residues: ATP synthase gamma chain (326 aa).

The protein belongs to the ATPase gamma chain family. As to quaternary structure, F-type ATPases have 2 components, CF(1) - the catalytic core - and CF(0) - the membrane proton channel. CF(1) has five subunits: alpha(3), beta(3), gamma(1), delta(1), epsilon(1). CF(0) has three main subunits: a, b and c.

The protein resides in the cell membrane. In terms of biological role, produces ATP from ADP in the presence of a proton gradient across the membrane. The gamma chain is believed to be important in regulating ATPase activity and the flow of protons through the CF(0) complex. The protein is ATP synthase gamma chain of Corynebacterium jeikeium (strain K411).